The chain runs to 339 residues: Caspase drICE (339 aa).

Positions 1 to 28 are excised as a propeptide; sequence MDATNNGESADQVGIRVGNPEQPNDHTD. The interval 1 to 45 is disordered; the sequence is MDATNNGESADQVGIRVGNPEQPNDHTDALGSVGSGGAGSSGLVA. Residues His169 and Cys211 contribute to the active site. Residues 218–230 constitute a propeptide that is removed on maturation; sequence GGVTMQRSQTETD.

The protein belongs to the peptidase C14A family. In terms of assembly, heterotetramer that consists of two anti-parallel arranged heterodimers, each one formed by a 21 kDa (p21) and a 12 kDa (p12) subunit. Inactive pro-form can homodimerize. Dronc and Drice can form a stable complex. Interacts with Diap2 (via BIR3 domain) to form a stable complex. May interact with some isoforms of Dark.

With respect to regulation, zymogen activated by proteolytic cleavage; cleaved by the initiator caspase Dronc upon apoptosis induction. Its function is as follows. Involved in the activation cascade of caspases responsible for apoptosis execution. Acts downstream of rpr. Cleaves baculovirus p35 and lamin DmO in vitro. This chain is Caspase drICE (Drice), found in Drosophila melanogaster (Fruit fly).